The sequence spans 247 residues: Proteasome subunit alpha (247 aa).

It belongs to the peptidase T1A family. The 20S proteasome core is composed of 14 alpha and 14 beta subunits that assemble into four stacked heptameric rings, resulting in a barrel-shaped structure. The two inner rings, each composed of seven catalytic beta subunits, are sandwiched by two outer rings, each composed of seven alpha subunits. The catalytic chamber with the active sites is on the inside of the barrel. Has a gated structure, the ends of the cylinder being occluded by the N-termini of the alpha-subunits. Is capped at one or both ends by the proteasome regulatory ATPase, PAN.

The protein resides in the cytoplasm. With respect to regulation, the formation of the proteasomal ATPase PAN-20S proteasome complex, via the docking of the C-termini of PAN into the intersubunit pockets in the alpha-rings, triggers opening of the gate for substrate entry. Interconversion between the open-gate and close-gate conformations leads to a dynamic regulation of the 20S proteasome proteolysis activity. Functionally, component of the proteasome core, a large protease complex with broad specificity involved in protein degradation. The protein is Proteasome subunit alpha of Methanosarcina acetivorans (strain ATCC 35395 / DSM 2834 / JCM 12185 / C2A).